A 310-amino-acid polypeptide reads, in one-letter code: GMP synthase [glutamine-hydrolyzing] subunit B (310 aa).

The region spanning 1–187 (MSFSDYISRI…LGLPTDIQPF (187 aa)) is the GMPS ATP-PPase domain. 27 to 33 (SGGQDSS) contacts ATP.

In terms of assembly, heterodimer composed of a glutamine amidotransferase subunit (A) and a GMP-binding subunit (B).

The catalysed reaction is XMP + L-glutamine + ATP + H2O = GMP + L-glutamate + AMP + diphosphate + 2 H(+). The protein operates within purine metabolism; GMP biosynthesis; GMP from XMP (L-Gln route): step 1/1. Its function is as follows. Catalyzes the synthesis of GMP from XMP. In Thermoplasma volcanium (strain ATCC 51530 / DSM 4299 / JCM 9571 / NBRC 15438 / GSS1), this protein is GMP synthase [glutamine-hydrolyzing] subunit B (guaAB).